A 242-amino-acid polypeptide reads, in one-letter code: Small ribosomal subunit protein uS2 (242 aa).

Belongs to the universal ribosomal protein uS2 family.

This chain is Small ribosomal subunit protein uS2, found in Shewanella putrefaciens (strain CN-32 / ATCC BAA-453).